Reading from the N-terminus, the 347-residue chain is Phenylalanine--tRNA ligase alpha subunit (347 aa).

Residue E261 participates in Mg(2+) binding.

Belongs to the class-II aminoacyl-tRNA synthetase family. Phe-tRNA synthetase alpha subunit type 1 subfamily. In terms of assembly, tetramer of two alpha and two beta subunits. It depends on Mg(2+) as a cofactor.

The protein localises to the cytoplasm. The enzyme catalyses tRNA(Phe) + L-phenylalanine + ATP = L-phenylalanyl-tRNA(Phe) + AMP + diphosphate + H(+). The polypeptide is Phenylalanine--tRNA ligase alpha subunit (Streptococcus pyogenes serotype M1).